Reading from the N-terminus, the 431-residue chain is Sulfide dehydrogenase [flavocytochrome c] flavoprotein chain (431 aa).

A signal peptide (tat-type signal) is located at residues 1-30 (MTLNRRDFIKTSGAAVAAVGILGFPHLAFG). 70–76 (YTCYLSN) contributes to the FAD binding site. A disulfide bridge links Cys191 with Cys367.

As to quaternary structure, dimer of one cytochrome and one flavoprotein. Predicted to be exported by the Tat system. The position of the signal peptide cleavage has been experimentally proven.

It is found in the periplasm. It carries out the reaction hydrogen sulfide + 2 Fe(III)-[cytochrome c] = sulfur + 2 Fe(II)-[cytochrome c] + H(+). The chain is Sulfide dehydrogenase [flavocytochrome c] flavoprotein chain (fccB) from Allochromatium vinosum (strain ATCC 17899 / DSM 180 / NBRC 103801 / NCIMB 10441 / D) (Chromatium vinosum).